Consider the following 480-residue polypeptide: ATP synthase subunit beta (480 aa).

Position 158–165 (158–165) interacts with ATP; that stretch reads GGAGVGKT.

It belongs to the ATPase alpha/beta chains family. As to quaternary structure, F-type ATPases have 2 components, CF(1) - the catalytic core - and CF(0) - the membrane proton channel. CF(1) has five subunits: alpha(3), beta(3), gamma(1), delta(1), epsilon(1). CF(0) has three main subunits: a(1), b(2) and c(9-12). The alpha and beta chains form an alternating ring which encloses part of the gamma chain. CF(1) is attached to CF(0) by a central stalk formed by the gamma and epsilon chains, while a peripheral stalk is formed by the delta and b chains.

It is found in the cell inner membrane. The catalysed reaction is ATP + H2O + 4 H(+)(in) = ADP + phosphate + 5 H(+)(out). In terms of biological role, produces ATP from ADP in the presence of a proton gradient across the membrane. The catalytic sites are hosted primarily by the beta subunits. The protein is ATP synthase subunit beta of Acidobacterium capsulatum (strain ATCC 51196 / DSM 11244 / BCRC 80197 / JCM 7670 / NBRC 15755 / NCIMB 13165 / 161).